Here is a 77-residue protein sequence, read N- to C-terminus: UPF0401 protein ECP_3853 (77 aa).

It belongs to the UPF0401 family.

This Escherichia coli O6:K15:H31 (strain 536 / UPEC) protein is UPF0401 protein ECP_3853.